Consider the following 153-residue polypeptide: Large ribosomal subunit protein uL22 (153 aa).

The disordered stretch occupies residues glutamate 125–alanine 153.

This sequence belongs to the universal ribosomal protein uL22 family. Part of the 50S ribosomal subunit.

This protein binds specifically to 23S rRNA; its binding is stimulated by other ribosomal proteins, e.g. L4, L17, and L20. It is important during the early stages of 50S assembly. It makes multiple contacts with different domains of the 23S rRNA in the assembled 50S subunit and ribosome. Its function is as follows. The globular domain of the protein is located near the polypeptide exit tunnel on the outside of the subunit, while an extended beta-hairpin is found that lines the wall of the exit tunnel in the center of the 70S ribosome. This Cutibacterium acnes (strain DSM 16379 / KPA171202) (Propionibacterium acnes) protein is Large ribosomal subunit protein uL22.